The primary structure comprises 474 residues: tRNA-2-methylthio-N(6)-dimethylallyladenosine synthase (474 aa).

The 118-residue stretch at 3–120 (KKLHIKTWGC…LPEMINSVRG (118 aa)) folds into the MTTase N-terminal domain. [4Fe-4S] cluster is bound by residues cysteine 12, cysteine 49, cysteine 83, cysteine 157, cysteine 161, and cysteine 164. A Radical SAM core domain is found at 143 to 375 (RAEGPTAFVS…QERINQQAMA (233 aa)). Residues 378-441 (RRMLGTTQRI…PNSLRGKVVR (64 aa)) form the TRAM domain.

The protein belongs to the methylthiotransferase family. MiaB subfamily. As to quaternary structure, monomer. [4Fe-4S] cluster serves as cofactor.

Its subcellular location is the cytoplasm. The catalysed reaction is N(6)-dimethylallyladenosine(37) in tRNA + (sulfur carrier)-SH + AH2 + 2 S-adenosyl-L-methionine = 2-methylsulfanyl-N(6)-dimethylallyladenosine(37) in tRNA + (sulfur carrier)-H + 5'-deoxyadenosine + L-methionine + A + S-adenosyl-L-homocysteine + 2 H(+). In terms of biological role, catalyzes the methylthiolation of N6-(dimethylallyl)adenosine (i(6)A), leading to the formation of 2-methylthio-N6-(dimethylallyl)adenosine (ms(2)i(6)A) at position 37 in tRNAs that read codons beginning with uridine. The chain is tRNA-2-methylthio-N(6)-dimethylallyladenosine synthase from Escherichia coli O81 (strain ED1a).